Consider the following 78-residue polypeptide: Small ribosomal subunit protein bS18 (78 aa).

This sequence belongs to the bacterial ribosomal protein bS18 family. As to quaternary structure, part of the 30S ribosomal subunit. Forms a tight heterodimer with protein bS6.

Binds as a heterodimer with protein bS6 to the central domain of the 16S rRNA, where it helps stabilize the platform of the 30S subunit. This chain is Small ribosomal subunit protein bS18, found in Lactobacillus delbrueckii subsp. bulgaricus (strain ATCC BAA-365 / Lb-18).